The sequence spans 224 residues: MIVIENILGQDVLTEVAAALRELRWEDGRNTAGATARRVKRNQQADLSSRTGSKVREVLLEAVKRHPVVEAYARPLKFAPPLISCSGEGDAYGLHIDNPVMGKGDARLRTDLSFTLFLSPPESYDGGELEIETVFKTESVKLPAGSMVIYPSTELHRVTPVTSGERFVFVGWIQSAIKDAAQRAILFDVTNLKAGLARRFPPGSPELLTLAKTESNLIRMWSDI.

In terms of domain architecture, Fe2OG dioxygenase spans 77–175 (KFAPPLISCS…RFVFVGWIQS (99 aa)). Residues histidine 95, aspartate 97, and histidine 156 each coordinate Fe cation. Residue arginine 166 coordinates 2-oxoglutarate.

Fe(2+) serves as cofactor. It depends on L-ascorbate as a cofactor.

The sequence is that of PKHD-type hydroxylase HNE_1625 from Hyphomonas neptunium (strain ATCC 15444).